The chain runs to 344 residues: Cyclin-G2 (344 aa).

Residues 301 to 313 (ESESEDSCEDMSC) are compositionally biased toward acidic residues. The interval 301 to 320 (ESESEDSCEDMSCGEESLSS) is disordered.

It belongs to the cyclin family. Cyclin G subfamily. High levels in cerebellum, thymus, spleen and prostate. Low levels in skeletal muscle.

It is found in the cytoplasm. In terms of biological role, may play a role in growth regulation and in negative regulation of cell cycle progression. The polypeptide is Cyclin-G2 (CCNG2) (Homo sapiens (Human)).